The chain runs to 99 residues: MALTSQDIARVANLARLELRPEETEHTLSQLNGFFALVEQMAAVNTDGVEPLAHPAAVIGEVALRLRDDIASEPNQREASQVSAPAVERGLFLVPKVIE.

It belongs to the GatC family. Heterotrimer of A, B and C subunits.

The enzyme catalyses L-glutamyl-tRNA(Gln) + L-glutamine + ATP + H2O = L-glutaminyl-tRNA(Gln) + L-glutamate + ADP + phosphate + H(+). It catalyses the reaction L-aspartyl-tRNA(Asn) + L-glutamine + ATP + H2O = L-asparaginyl-tRNA(Asn) + L-glutamate + ADP + phosphate + 2 H(+). Its function is as follows. Allows the formation of correctly charged Asn-tRNA(Asn) or Gln-tRNA(Gln) through the transamidation of misacylated Asp-tRNA(Asn) or Glu-tRNA(Gln) in organisms which lack either or both of asparaginyl-tRNA or glutaminyl-tRNA synthetases. The reaction takes place in the presence of glutamine and ATP through an activated phospho-Asp-tRNA(Asn) or phospho-Glu-tRNA(Gln). The sequence is that of Aspartyl/glutamyl-tRNA(Asn/Gln) amidotransferase subunit C from Polaromonas sp. (strain JS666 / ATCC BAA-500).